A 62-amino-acid polypeptide reads, in one-letter code: Chromatin protein Cren7 1 (62 aa).

The protein belongs to the Cren7 family. Monomer. Post-translationally, methylated at multiple sites, to varying extents.

Its subcellular location is the chromosome. The protein resides in the cytoplasm. Its function is as follows. A chromatin protein, binds double-stranded DNA without sequence specificity. Constrains negative DNA supercoils. This is Chromatin protein Cren7 1 (cren7-1) from Hyperthermus butylicus (strain DSM 5456 / JCM 9403 / PLM1-5).